A 309-amino-acid chain; its full sequence is Mitochondrial import receptor subunit TOM34 (309 aa).

Ser8 is subject to Phosphoserine. TPR repeat units follow at residues 9–42, 51–84, and 86–118; these read VEQLRAAGNQNFRNGQYGEASALYERALRLLQAR, SVLYSNRAACYLKDGNCTDCIKDCTSALALVPFS, and KPLLRRASAYEALEKYSLAYVDYKTVLQIDNSV. Residues 158–187 form a disordered region; that stretch reads WSSLPSENHKETAKSKSKETTATKNRVPSA. Ser160 is subject to Phosphoserine. A compositionally biased stretch (basic and acidic residues) spans 164–178; sequence ENHKETAKSKSKETT. Ser186 carries the post-translational modification Phosphoserine. 3 TPR repeats span residues 193–226, 227–260, and 262–294; these read ARVLKEEGNELVKKGNHKKAIEKYSESLLFSSLE, SATYSNRALCHLVLKQYKEAEKDCTEALKLDGKN, and KAFYRRAQAYKALKDYKSSLADISSLLQIEPRN. Lys197 participates in a covalent cross-link: Glycyl lysine isopeptide (Lys-Gly) (interchain with G-Cter in SUMO2).

The protein belongs to the Tom34 family. In terms of assembly, interacts with HSP90A, VCP, ATP6V1D, KIAA0665, AMPK, and DMAP1 through its TPR repeat.

It is found in the cytoplasm. Its subcellular location is the mitochondrion outer membrane. In terms of biological role, plays a role in the import of cytosolically synthesized preproteins into mitochondria. Binds the mature portion of precursor proteins. Interacts with cellular components, and possesses weak ATPase activity. May be a chaperone-like protein that helps to keep newly synthesized precursors in an unfolded import compatible state. This chain is Mitochondrial import receptor subunit TOM34 (Tomm34), found in Rattus norvegicus (Rat).